We begin with the raw amino-acid sequence, 141 residues long: Hemoglobin subunit alpha-D (141 aa).

The Globin domain maps to 1–141 (MLTAEDKKLI…VAAVLAEKYR (141 aa)). The heme b site is built by H58 and H87.

In terms of assembly, heterotetramer of two alpha-D chains and two beta chains. As to expression, red blood cells.

Functionally, involved in oxygen transport from the lung to the various peripheral tissues. The polypeptide is Hemoglobin subunit alpha-D (HBAD) (Aythya fuligula (Tufted duck)).